The following is a 284-amino-acid chain: uncharacterized protein (284 aa).

Residues 1 to 8 (MLWKVSKM) are Cytoplasmic-facing. A helical membrane pass occupies residues 9–25 (FLGGLVALTTISVATLY). Topologically, residues 26-80 (HYQNRLVYPSWAQGARNHVDTPDSRGIPYEKLTLITQDHIKLEAWDIKNENSTST) are extracellular. Residues 81 to 101 (VLILCPNAGNIGYFILIIDIF) traverse the membrane as a helical segment. Residues 102–284 (YRQFGMSVFI…RDFLIEKGFI (183 aa)) are Cytoplasmic-facing.

This sequence to S.pombe bem46 and M.tuberculosis Rv2307c.

It is found in the mitochondrion membrane. This is an uncharacterized protein from Saccharomyces cerevisiae (strain ATCC 204508 / S288c) (Baker's yeast).